The primary structure comprises 537 residues: Fucosyltransferase 6 (537 aa).

Residues 1 to 20 lie on the Cytoplasmic side of the membrane; it reads MYHIFQISSEVFRAFGLKMK. A helical; Signal-anchor for type II membrane protein transmembrane segment spans residues 21–41; sequence ILLTLVFSGLLIWSVVLVSFS. Over 42-537 the chain is Lumenal; it reads NDFNNQLLVA…NDGLKLFDEL (496 aa). N-linked (GlcNAc...) asparagine glycosylation is found at Asn-54, Asn-231, and Asn-378.

This sequence belongs to the glycosyltransferase 37 family. As to expression, expressed in roots and flowers.

The protein resides in the golgi apparatus. It is found in the golgi stack membrane. The protein operates within protein modification; protein glycosylation. Its function is as follows. May be involved in cell wall biosynthesis. May act as a fucosyltransferase. The chain is Fucosyltransferase 6 (FUT6) from Arabidopsis thaliana (Mouse-ear cress).